We begin with the raw amino-acid sequence, 361 residues long: Large ribosomal subunit protein uL3 (361 aa).

The span at 1–14 shows a compositional bias: basic residues; sequence MGRGGRRNPGRPRR. Disordered regions lie at residues 1–33 and 337–361; these read MGRG…PRIR and TSQQ…PASA.

The protein belongs to the universal ribosomal protein uL3 family. Part of the 50S ribosomal subunit. Forms a cluster with proteins L14 and L24e.

In terms of biological role, one of the primary rRNA binding proteins, it binds directly near the 3'-end of the 23S rRNA, where it nucleates assembly of the 50S subunit. This is Large ribosomal subunit protein uL3 from Methanopyrus kandleri (strain AV19 / DSM 6324 / JCM 9639 / NBRC 100938).